We begin with the raw amino-acid sequence, 208 residues long: Uracil phosphoribosyltransferase (208 aa).

Residues Arg78, Arg103, and Asp130 to Ser138 contribute to the 5-phospho-alpha-D-ribose 1-diphosphate site. Uracil contacts are provided by residues Ile193 and Gly198–Ala200. 5-phospho-alpha-D-ribose 1-diphosphate is bound at residue Asp199.

This sequence belongs to the UPRTase family. The cofactor is Mg(2+).

The enzyme catalyses UMP + diphosphate = 5-phospho-alpha-D-ribose 1-diphosphate + uracil. Its pathway is pyrimidine metabolism; UMP biosynthesis via salvage pathway; UMP from uracil: step 1/1. Its activity is regulated as follows. Allosterically activated by GTP. Its function is as follows. Catalyzes the conversion of uracil and 5-phospho-alpha-D-ribose 1-diphosphate (PRPP) to UMP and diphosphate. The sequence is that of Uracil phosphoribosyltransferase from Actinobacillus pleuropneumoniae serotype 5b (strain L20).